A 157-amino-acid chain; its full sequence is ATP synthase subunit b (157 aa).

A helical membrane pass occupies residues 7-27 (LIAQLVVFFILAWFTMKFVWP).

It belongs to the ATPase B chain family. In terms of assembly, F-type ATPases have 2 components, F(1) - the catalytic core - and F(0) - the membrane proton channel. F(1) has five subunits: alpha(3), beta(3), gamma(1), delta(1), epsilon(1). F(0) has three main subunits: a(1), b(2) and c(10-14). The alpha and beta chains form an alternating ring which encloses part of the gamma chain. F(1) is attached to F(0) by a central stalk formed by the gamma and epsilon chains, while a peripheral stalk is formed by the delta and b chains.

It is found in the cell inner membrane. F(1)F(0) ATP synthase produces ATP from ADP in the presence of a proton or sodium gradient. F-type ATPases consist of two structural domains, F(1) containing the extramembraneous catalytic core and F(0) containing the membrane proton channel, linked together by a central stalk and a peripheral stalk. During catalysis, ATP synthesis in the catalytic domain of F(1) is coupled via a rotary mechanism of the central stalk subunits to proton translocation. Its function is as follows. Component of the F(0) channel, it forms part of the peripheral stalk, linking F(1) to F(0). This Azoarcus sp. (strain BH72) protein is ATP synthase subunit b.